The following is a 643-amino-acid chain: Threonine--tRNA ligase (643 aa).

Positions Met1 to Thr61 constitute a TGS domain. The segment at Asp243–Pro534 is catalytic. Zn(2+)-binding residues include Cys334, His385, and His511.

This sequence belongs to the class-II aminoacyl-tRNA synthetase family. As to quaternary structure, homodimer. Zn(2+) is required as a cofactor.

It localises to the cytoplasm. The catalysed reaction is tRNA(Thr) + L-threonine + ATP = L-threonyl-tRNA(Thr) + AMP + diphosphate + H(+). Catalyzes the attachment of threonine to tRNA(Thr) in a two-step reaction: L-threonine is first activated by ATP to form Thr-AMP and then transferred to the acceptor end of tRNA(Thr). Also edits incorrectly charged L-seryl-tRNA(Thr). The protein is Threonine--tRNA ligase of Haemophilus influenzae (strain 86-028NP).